The primary structure comprises 445 residues: Phosphoglucosamine mutase (445 aa).

Ser-99 (phosphoserine intermediate) is an active-site residue. Residues Ser-99, Asp-242, Asp-244, and Asp-246 each contribute to the Mg(2+) site. Ser-99 carries the post-translational modification Phosphoserine.

It belongs to the phosphohexose mutase family. Requires Mg(2+) as cofactor. Activated by phosphorylation.

The catalysed reaction is alpha-D-glucosamine 1-phosphate = D-glucosamine 6-phosphate. Functionally, catalyzes the conversion of glucosamine-6-phosphate to glucosamine-1-phosphate. The polypeptide is Phosphoglucosamine mutase (Helicobacter pylori (strain HPAG1)).